Here is a 228-residue protein sequence, read N- to C-terminus: UPF0758 protein CLI_3057 (228 aa).

Residues 106–228 (KINTPLDVSN…YVSMKEKGTI (123 aa)) enclose the MPN domain. Zn(2+) contacts are provided by His-177, His-179, and Asp-190. The JAMM motif motif lies at 177–190 (HNHPSGDPTPSKED).

The protein belongs to the UPF0758 family.

The sequence is that of UPF0758 protein CLI_3057 from Clostridium botulinum (strain Langeland / NCTC 10281 / Type F).